A 552-amino-acid chain; its full sequence is Arginine--tRNA ligase (552 aa).

Residues 123-133 carry the 'HIGH' region motif; sequence ANPTGPLTIGR.

It belongs to the class-I aminoacyl-tRNA synthetase family. Monomer.

It is found in the cytoplasm. The enzyme catalyses tRNA(Arg) + L-arginine + ATP = L-arginyl-tRNA(Arg) + AMP + diphosphate. The chain is Arginine--tRNA ligase from Pelodictyon phaeoclathratiforme (strain DSM 5477 / BU-1).